The sequence spans 385 residues: Transcription termination factor 2, mitochondrial (385 aa).

The transit peptide at 1-35 directs the protein to the mitochondrion; it reads MPWRLPTGHQLCRLCLLRKPRPALKIKPSSACVTY.

It belongs to the mTERF family. Monomer.

Its subcellular location is the mitochondrion matrix. It localises to the mitochondrion nucleoid. Functionally, binds mitochondrial DNA and plays a role in the regulation of transcription of mitochondrial mRNA and rRNA species. The chain is Transcription termination factor 2, mitochondrial (Mterf2) from Mus musculus (Mouse).